We begin with the raw amino-acid sequence, 479 residues long: Aldehyde dehydrogenase (479 aa).

190-195 (GSSKVG) contacts NAD(+). Glu212 (proton acceptor) is an active-site residue. Cys247 acts as the Nucleophile in catalysis.

The protein belongs to the aldehyde dehydrogenase family.

Its subcellular location is the plastid. It is found in the amyloplast. It localises to the chloroplast. The enzyme catalyses an aldehyde + NAD(+) + H2O = a carboxylate + NADH + 2 H(+). In terms of biological role, oxidizes nonanal, propionaldehyde and acetaldehyde in vitro, in the following decreasing order of reactivity: nonanal, propionaldehyde, acetaldehyde. The protein is Aldehyde dehydrogenase (ALDH) of Craterostigma plantagineum (Blue gem).